A 603-amino-acid chain; its full sequence is ATP-dependent RNA helicase MRH4, mitochondrial (603 aa).

The N-terminal 71 residues, 1-71, are a transit peptide targeting the mitochondrion; the sequence is MISTGLPLFT…GNGAGAGARV (71 aa). Residues 151 to 158 carry the Q motif motif; it reads VIKPTPVQ. One can recognise a Helicase ATP-binding domain in the interval 193 to 409; it reads KNEEQKTKIF…LRLFPDQKSL (217 aa). 206–213 lines the ATP pocket; that stretch reads AETGSGKT. The short motif at 357–360 is the DEAD box element; the sequence is DEAD. Residues 443 to 603 form the Helicase C-terminal domain; sequence CLAQAIYAIS…SAIMKGSRIG (161 aa).

Belongs to the DEAD box helicase family. MRH4 subfamily.

The protein localises to the mitochondrion. The catalysed reaction is ATP + H2O = ADP + phosphate + H(+). Functionally, ATP-binding RNA helicase involved in mitochondrial RNA metabolism. Required for maintenance of mitochondrial DNA. The polypeptide is ATP-dependent RNA helicase MRH4, mitochondrial (MRH4) (Lodderomyces elongisporus (strain ATCC 11503 / CBS 2605 / JCM 1781 / NBRC 1676 / NRRL YB-4239) (Yeast)).